The sequence spans 488 residues: Wax ester synthase/diacylglycerol acyltransferase 8 (488 aa).

The Cytoplasmic portion of the chain corresponds to 1–195; that stretch reads MKNEEEEPLS…AIFTIGSTMR (195 aa). Residue His-135 is the Proton acceptor of the active site. The chain crosses the membrane as a helical span at residues 196-214; sequence LIWNTLVDMFLLFATMLFL. Over 215–488 the chain is Lumenal; it reads KDTKTPLKGG…RGLLKEAYKV (274 aa). N-linked (GlcNAc...) asparagine glycosylation is found at Asn-238, Asn-252, Asn-353, and Asn-397.

This sequence in the N-terminal section; belongs to the long-chain O-acyltransferase family. Mostly expressed in flowers and siliques and at low levels in stems.

The protein resides in the cell membrane. It is found in the endoplasmic reticulum membrane. It catalyses the reaction an acyl-CoA + a 1,2-diacyl-sn-glycerol = a triacyl-sn-glycerol + CoA. It carries out the reaction a long chain fatty alcohol + a fatty acyl-CoA = a wax ester + CoA. It functions in the pathway glycerolipid metabolism; triacylglycerol biosynthesis. It participates in lipid metabolism. Functionally, bifunctional wax ester synthase/diacylglycerol acyltransferase. Involved in cuticular wax biosynthesis. The polypeptide is Wax ester synthase/diacylglycerol acyltransferase 8 (Arabidopsis thaliana (Mouse-ear cress)).